A 231-amino-acid polypeptide reads, in one-letter code: Small ribosomal subunit protein uS3 (231 aa).

A KH type-2 domain is found at 39–107; the sequence is IRELLHKELK…DVVLNIVEIR (69 aa).

This sequence belongs to the universal ribosomal protein uS3 family. Part of the 30S ribosomal subunit. Forms a tight complex with proteins S10 and S14.

In terms of biological role, binds the lower part of the 30S subunit head. Binds mRNA in the 70S ribosome, positioning it for translation. This is Small ribosomal subunit protein uS3 from Nitrobacter winogradskyi (strain ATCC 25391 / DSM 10237 / CIP 104748 / NCIMB 11846 / Nb-255).